Reading from the N-terminus, the 274-residue chain is MQALQSIIDNAFEQRAEITPDNVEPQVRDAINNVIAQLDSGKLRVAEKINGQWVTHQWLKKAVLLSFRISHNQVIDGSESRYFDKVPMKFANYDQARFEKEGFRVVPPAAVRQGAYIARNTVLMPSYVNIGAYVDEGSMVDTWATVGSCAQIGKNVHLSGGVGIGGVLEPLQANPTIIEDNCFIGARSEIVEGVIVEEGSVISMGVYIGQSTKIYDRETGEIHYGRVPAGSVVVSGNLPSKDGRYSLYCAVIVKKVDAKTRGKVGINELLRTID.

The protein belongs to the transferase hexapeptide repeat family.

It localises to the cytoplasm. It catalyses the reaction (S)-2,3,4,5-tetrahydrodipicolinate + succinyl-CoA + H2O = (S)-2-succinylamino-6-oxoheptanedioate + CoA. It participates in amino-acid biosynthesis; L-lysine biosynthesis via DAP pathway; LL-2,6-diaminopimelate from (S)-tetrahydrodipicolinate (succinylase route): step 1/3. The chain is 2,3,4,5-tetrahydropyridine-2,6-dicarboxylate N-succinyltransferase from Proteus mirabilis (strain HI4320).